Reading from the N-terminus, the 315-residue chain is 4-diphosphocytidyl-2-C-methyl-D-erythritol kinase (315 aa).

Residue lysine 8 is part of the active site. 93 to 103 (PVAAGLAGGSS) is a binding site for ATP. The active site involves aspartate 135.

It belongs to the GHMP kinase family. IspE subfamily.

It carries out the reaction 4-CDP-2-C-methyl-D-erythritol + ATP = 4-CDP-2-C-methyl-D-erythritol 2-phosphate + ADP + H(+). The protein operates within isoprenoid biosynthesis; isopentenyl diphosphate biosynthesis via DXP pathway; isopentenyl diphosphate from 1-deoxy-D-xylulose 5-phosphate: step 3/6. In terms of biological role, catalyzes the phosphorylation of the position 2 hydroxy group of 4-diphosphocytidyl-2C-methyl-D-erythritol. The sequence is that of 4-diphosphocytidyl-2-C-methyl-D-erythritol kinase from Heliobacterium modesticaldum (strain ATCC 51547 / Ice1).